Here is a 209-residue protein sequence, read N- to C-terminus: Ribosome maturation factor RimM (209 aa).

The interval 1–28 (MARRPQRPAPSGRAGAGRGAAGAAPPGP) is disordered. In terms of domain architecture, PRC barrel spans 123-197 (EDEFFTADLV…RVTIAPPEDL (75 aa)).

Belongs to the RimM family. As to quaternary structure, binds ribosomal protein uS19.

The protein resides in the cytoplasm. Its function is as follows. An accessory protein needed during the final step in the assembly of 30S ribosomal subunit, possibly for assembly of the head region. Essential for efficient processing of 16S rRNA. May be needed both before and after RbfA during the maturation of 16S rRNA. It has affinity for free ribosomal 30S subunits but not for 70S ribosomes. This chain is Ribosome maturation factor RimM, found in Methylobacterium sp. (strain 4-46).